The primary structure comprises 481 residues: uncharacterized protein (481 aa).

The protein belongs to the UbiD family.

This is an uncharacterized protein from Archaeoglobus fulgidus (strain ATCC 49558 / DSM 4304 / JCM 9628 / NBRC 100126 / VC-16).